The following is a 482-amino-acid chain: tRNA sulfurtransferase (482 aa).

Positions 61–165 (PAIRDALTRI…NDRLLLVKGR (105 aa)) constitute a THUMP domain. ATP contacts are provided by residues 183–184 (LI), lysine 265, glycine 287, and glutamine 296. The cysteines at positions 344 and 456 are disulfide-linked. Residues 404–482 (FGANDAILDI…GFSNVKVYRP (79 aa)) form the Rhodanese domain. Cysteine 456 serves as the catalytic Cysteine persulfide intermediate.

This sequence belongs to the ThiI family.

It is found in the cytoplasm. The enzyme catalyses [ThiI sulfur-carrier protein]-S-sulfanyl-L-cysteine + a uridine in tRNA + 2 reduced [2Fe-2S]-[ferredoxin] + ATP + H(+) = [ThiI sulfur-carrier protein]-L-cysteine + a 4-thiouridine in tRNA + 2 oxidized [2Fe-2S]-[ferredoxin] + AMP + diphosphate. It carries out the reaction [ThiS sulfur-carrier protein]-C-terminal Gly-Gly-AMP + S-sulfanyl-L-cysteinyl-[cysteine desulfurase] + AH2 = [ThiS sulfur-carrier protein]-C-terminal-Gly-aminoethanethioate + L-cysteinyl-[cysteine desulfurase] + A + AMP + 2 H(+). It participates in cofactor biosynthesis; thiamine diphosphate biosynthesis. Functionally, catalyzes the ATP-dependent transfer of a sulfur to tRNA to produce 4-thiouridine in position 8 of tRNAs, which functions as a near-UV photosensor. Also catalyzes the transfer of sulfur to the sulfur carrier protein ThiS, forming ThiS-thiocarboxylate. This is a step in the synthesis of thiazole, in the thiamine biosynthesis pathway. The sulfur is donated as persulfide by IscS. This chain is tRNA sulfurtransferase, found in Klebsiella pneumoniae subsp. pneumoniae (strain ATCC 700721 / MGH 78578).